Here is a 314-residue protein sequence, read N- to C-terminus: MKNLLSISDLTPNEILSIMDEADRFAEALKGREVKKLPTLRGRTVFTMFYENSTRTRASFETAGKWMSADVINISASSSSVKKGESLRDTALTLKSIGADALVMRHPSSGAAQHVANFIGDTAVINAGDGSNQHPTQALLDATTLRRQRGDLSGQHVVIVGDILHSRVARSNAQLLNALGADVTFVAPPTLLPIGVENWGVRVSHDLDAELPSADAVMMLRVQAERMNGGFFPSHREYATRYGLSKARHAMLKPDAVVMHPGPMLRGMEINYSVADAPNTVVLQQVTAGVHVRMAILFQLLIGGHSASETETDA.

Residues Arg55 and Thr56 each contribute to the carbamoyl phosphate site. Lys83 contacts L-aspartate. The carbamoyl phosphate site is built by Arg105, His134, and Gln137. L-aspartate is bound by residues Arg167 and Arg221. Carbamoyl phosphate-binding residues include Gly262 and Pro263.

It belongs to the aspartate/ornithine carbamoyltransferase superfamily. ATCase family. In terms of assembly, heterododecamer (2C3:3R2) of six catalytic PyrB chains organized as two trimers (C3), and six regulatory PyrI chains organized as three dimers (R2).

It catalyses the reaction carbamoyl phosphate + L-aspartate = N-carbamoyl-L-aspartate + phosphate + H(+). Its pathway is pyrimidine metabolism; UMP biosynthesis via de novo pathway; (S)-dihydroorotate from bicarbonate: step 2/3. Functionally, catalyzes the condensation of carbamoyl phosphate and aspartate to form carbamoyl aspartate and inorganic phosphate, the committed step in the de novo pyrimidine nucleotide biosynthesis pathway. This is Aspartate carbamoyltransferase catalytic subunit from Corynebacterium urealyticum (strain ATCC 43042 / DSM 7109).